An 860-amino-acid chain; its full sequence is Leucine--tRNA ligase (860 aa).

The short motif at 42–52 (PYPSGRLHMGH) is the 'HIGH' region element. Residues 619 to 623 (KMSKS) carry the 'KMSKS' region motif. ATP is bound at residue Lys622.

The protein belongs to the class-I aminoacyl-tRNA synthetase family.

The protein resides in the cytoplasm. It carries out the reaction tRNA(Leu) + L-leucine + ATP = L-leucyl-tRNA(Leu) + AMP + diphosphate. In Shigella boydii serotype 18 (strain CDC 3083-94 / BS512), this protein is Leucine--tRNA ligase.